Here is a 262-residue protein sequence, read N- to C-terminus: Phosphatidylserine decarboxylase proenzyme (262 aa).

Residues D86, H142, and S226 each act as charge relay system; for autoendoproteolytic cleavage activity in the active site. S226 serves as the catalytic Schiff-base intermediate with substrate; via pyruvic acid; for decarboxylase activity. Residue S226 is modified to Pyruvic acid (Ser); by autocatalysis.

This sequence belongs to the phosphatidylserine decarboxylase family. PSD-B subfamily. Prokaryotic type I sub-subfamily. As to quaternary structure, heterodimer of a large membrane-associated beta subunit and a small pyruvoyl-containing alpha subunit. The cofactor is pyruvate. Post-translationally, is synthesized initially as an inactive proenzyme. Formation of the active enzyme involves a self-maturation process in which the active site pyruvoyl group is generated from an internal serine residue via an autocatalytic post-translational modification. Two non-identical subunits are generated from the proenzyme in this reaction, and the pyruvate is formed at the N-terminus of the alpha chain, which is derived from the carboxyl end of the proenzyme. The autoendoproteolytic cleavage occurs by a canonical serine protease mechanism, in which the side chain hydroxyl group of the serine supplies its oxygen atom to form the C-terminus of the beta chain, while the remainder of the serine residue undergoes an oxidative deamination to produce ammonia and the pyruvoyl prosthetic group on the alpha chain. During this reaction, the Ser that is part of the protease active site of the proenzyme becomes the pyruvoyl prosthetic group, which constitutes an essential element of the active site of the mature decarboxylase.

It is found in the cell membrane. It carries out the reaction a 1,2-diacyl-sn-glycero-3-phospho-L-serine + H(+) = a 1,2-diacyl-sn-glycero-3-phosphoethanolamine + CO2. Its pathway is phospholipid metabolism; phosphatidylethanolamine biosynthesis; phosphatidylethanolamine from CDP-diacylglycerol: step 2/2. Its function is as follows. Catalyzes the formation of phosphatidylethanolamine (PtdEtn) from phosphatidylserine (PtdSer). This chain is Phosphatidylserine decarboxylase proenzyme, found in Bacillus thuringiensis (strain Al Hakam).